We begin with the raw amino-acid sequence, 363 residues long: Forkhead box protein I1 (363 aa).

The span at 1–18 (MNPVQQPAQQRSPASSLP) shows a compositional bias: low complexity. 3 disordered regions span residues 1-24 (MNPVQQPAQQRSPASSLPHPKRAQ), 210-269 (DNGN…SPPA), and 344-363 (TTAQKQPQFLQQPPLYQGRY). Residues 125–219 (RPPYSYSALI…DNGNFRRKRK (95 aa)) constitute a DNA-binding region (fork-head). Over residues 231–243 (KIGEDHLNPKGKE) the composition is skewed to basic and acidic residues. Composition is skewed to low complexity over residues 244-258 (SPPMITPSSPEEPSP) and 347-363 (QKQPQFLQQPPLYQGRY).

Its subcellular location is the nucleus. In terms of biological role, transcription factor. Essential for ventral specification of the early cephalic (head) ectoderm during gastrulation, playing a role in the 'non-neural' versus 'neural' cell fate choice. Binds to DNA via the target sequence 5'-[AG]TAAA[CT]A-3', with 5'-ATAAACA-3' being the preferred binding site. In Xenopus tropicalis (Western clawed frog), this protein is Forkhead box protein I1.